Consider the following 40-residue polypeptide: Large ribosomal subunit protein bL36 (40 aa).

The protein belongs to the bacterial ribosomal protein bL36 family.

The chain is Large ribosomal subunit protein bL36 from Corynebacterium aurimucosum (strain ATCC 700975 / DSM 44827 / CIP 107346 / CN-1) (Corynebacterium nigricans).